The sequence spans 1069 residues: Enteropeptidase (1069 aa).

At 1–18 the chain is on the cytoplasmic side; it reads MKSSRDEAVGHHSISSFE. A helical; Signal-anchor for type II membrane protein transmembrane segment spans residues 19-47; it reads VMLSALFIMLMVFSIGLIAVSWLAVKESE. The Extracellular portion of the chain corresponds to 48–1069; that stretch reads GDAALGKSHE…FIEWIHSFLH (1022 aa). One can recognise an SEA domain in the interval 54 to 169; that stretch reads KSHEVRGTFK…NSIDITASLS (116 aa). N-linked (GlcNAc...) asparagine glycans are attached at residues N147, N197, and N212. An LDL-receptor class A 1 domain is found at 227–268; that stretch reads IECQPGSRPCAHAWNCVATDLFCDGEVNCPDGSDEDTGLCAT. Cystine bridges form between C229/C242, C236/C255, C249/C266, and C270/C298. One can recognise a CUB 1 domain in the interval 270-379; it reads CDGRFLLTGD…IGFNATYSTF (110 aa). N-linked (GlcNAc...) asparagine glycans are attached at residues N373, N380, N433, N515, N579, and N675. The MAM domain maps to 387-549; it reads YEKIDCTFDD…ISLTNGICSQ (163 aa). Residues C569 and C597 are joined by a disulfide bond. One can recognise a CUB 2 domain in the interval 569–679; that stretch reads CGGPFELWEP…KGFKANFTSG (111 aa). The region spanning 686–724 is the LDL-receptor class A 2 domain; it reads EPCQDDEFQCKDGNCIPLGNLCDSYPHCRDGSDEASCVR. 3 disulfide bridges follow: C688/C700, C695/C713, and C707/C722. In terms of domain architecture, SRCR spans 723–816; sequence VRFLNGTRSN…LILLQCNHKS (94 aa). 4 N-linked (GlcNAc...) asparagine glycosylation sites follow: N727, N751, N770, and N791. Disulfide bonds link C802–C812, C817–C945, C859–C875, C959–C1027, C991–C1006, and C1017–C1045. In terms of domain architecture, Peptidase S1 spans 830–1069; the sequence is IVGGSDAQAG…FIEWIHSFLH (240 aa). The active-site Charge relay system is H874. N-linked (GlcNAc...) asparagine glycosylation occurs at N897. Residue D925 is the Charge relay system of the active site. 2 N-linked (GlcNAc...) asparagine glycosylation sites follow: N936 and N999. S1021 acts as the Charge relay system in catalysis.

The protein belongs to the peptidase S1 family. Heterodimer of a catalytic (light) chain and a multidomain (heavy) chain linked by a disulfide bond. Post-translationally, the chains are derived from a single precursor that is cleaved by a trypsin-like protease.

Its subcellular location is the membrane. The enzyme catalyses Activation of trypsinogen by selective cleavage of 6-Lys-|-Ile-7 bond.. Functionally, responsible for initiating activation of pancreatic proteolytic proenzymes (trypsin, chymotrypsin and carboxypeptidase A). It catalyzes the conversion of trypsinogen to trypsin which in turn activates other proenzymes including chymotrypsinogen, procarboxypeptidases, and proelastases. In Mus musculus (Mouse), this protein is Enteropeptidase (Tmprss15).